The chain runs to 389 residues: 1-acyl-sn-glycerol-3-phosphate acyltransferase 2 (389 aa).

Residues 2 to 22 (VIAAAVIVPLGLLFFISGLAV) traverse the membrane as a helical segment. Positions 91–96 (HRSDID) match the HXXXXD motif motif. Transmembrane regions (helical) follow at residues 305–325 (LAVV…FLHW) and 333–353 (KGIT…QILI). A disordered region spans residues 357-389 (QSERSTPAKVVPAKPKDNHHPESSSQTETEKEK). Basic and acidic residues predominate over residues 370–389 (KPKDNHHPESSSQTETEKEK).

Belongs to the 1-acyl-sn-glycerol-3-phosphate acyltransferase family. In terms of assembly, interacts with GPAT9 and DGAT1. Present in roots, leaves, stems, floral buds and siliques (at protein level). Widely expressed. In contrast to LPAT1, it is not expressed at higher level in leaves.

Its subcellular location is the endoplasmic reticulum membrane. It carries out the reaction a 1-acyl-sn-glycero-3-phosphate + an acyl-CoA = a 1,2-diacyl-sn-glycero-3-phosphate + CoA. It participates in phospholipid metabolism; CDP-diacylglycerol biosynthesis; CDP-diacylglycerol from sn-glycerol 3-phosphate: step 2/3. Its function is as follows. Converts lysophosphatidic acid (LPA) into phosphatidic acid by incorporating acyl moiety at the 2 position. Has preference for C-18-CoA substrates compared to C-16-CoA substrates. Required for female but not male gametophyte development. The sequence is that of 1-acyl-sn-glycerol-3-phosphate acyltransferase 2 (LPAT2) from Arabidopsis thaliana (Mouse-ear cress).